A 1025-amino-acid chain; its full sequence is MAPVLSKDVADIESILALNPRTQSHAALHSTLAKKLDKKHWKRNPDKNCFHCEKLENNFGDIKHTTLGERGALREAMRCLKCADAPCQKSCPTHLDIKSFITSISNKNYYGAAKMIFSDNPLGLTCGMVCPTSDLCVGGCNLYATEEGSINIGGLQQFASEVFKAMNIPQIRNPCLPSQEKMPEAYSAKIALLGAGPASISCASFLARLGYSDITIFEKQEYVGGLSTSEIPQFRLPYDVVNFEIELMKDLGVKIICGKSLSENEITLNTLKEEGYKAAFIGIGLPEPKTDDIFQGLTQDQGFYTSKDFLPLVAKSSKAGMCACHSPLPSIRGAVIVLGAGDTAFDCATSALRCGARRVFLVFRKGFVNIRAVPEEVELAKEEKCEFLPFLSPRKVIVKGGRIVAVQFVRTEQDETGKWNEDEDQIVHLKADVVISAFGSVLRDPKVKEALSPIKFNRWDLPEVDPETMQTSEPWVFAGGDIVGMANTTVESVNDGKQASWYIHKYIQAQYGASVSAKPELPLFYTPVDLVDISVEMAGLKFINPFGLASAAPTTSSSMIRRAFEAGWGFALTKTFSLDKDIVTNVSPRIVRGTTSGPMYGPGQSSFLNIELISEKTAAYWCQSVTELKADFPDNIVIASIMCSYNKNDWMELSRKAEASGADALELNLSCPHGMGERGMGLACGQDPELVRNICRWVRQAVQIPFFAKLTPNVTDIVSIARAAKEGGADGVTATNTVSGLMGLKADGTPWPAVGAGKRTTYGGVSGTAIRPIALRAVTTIARALPGFPILATGGIDSAESGLQFLHSGASVLQVCSAVQNQDFTVIQDYCTGLKALLYLKSIEELQGWDGQSPGTESHQKGKPVPRIAELMGKKLPNFGPYLEQRKKIIAEEKMRLKEQNAAFPPLERKPFIPKKPIPAIKDVIGKALQYLGTFGELSNIEQVVAVIDEEMCINCGKCYMTCNDSGYQAIQFDPETHLPTVTDTCTGCTLCLSVCPIIDCIRMVSRTTPYEPKRGLPLAVNPVC.

Residues 1 to 3 (MAP) constitute a propeptide that is removed on maturation. The 4Fe-4S ferredoxin-type 1 domain occupies 69-100 (ERGALREAMRCLKCADAPCQKSCPTHLDIKSF). [4Fe-4S] cluster is bound by residues C79, C82, C87, and C91. Position 129 (V129) interacts with FAD. C130, C136, C140, and Q156 together coordinate [4Fe-4S] cluster. Residues 194-198 (GAGPA), 218-226 (EKQEYVGGL), R235, and L261 contribute to the FAD site. Residues 340–343 (AGDT), 364–365 (RK), and R371 contribute to the NADP(+) site. N6-acetyllysine is present on K384. NADP(+) is bound by residues 437-439 (AFG) and 481-487 (DIVGMAN). An FAD-binding site is contributed by 480–489 (GDIVGMANTT). Residues S550 and 574-575 (KT) each bind FMN. Substrate is bound by residues N609 and 668-670 (NLS). C671 functions as the Proton acceptor in the catalytic mechanism. K709 lines the FMN pocket. 736 to 737 (NT) lines the substrate pocket. FMN contacts are provided by residues G767, 793 to 795 (TGG), and 816 to 817 (CS). 2 consecutive 4Fe-4S ferredoxin-type domains span residues 944 to 976 (VVAV…FDPE) and 978 to 1007 (HLPT…MVSR). Residues C953, C956, C959, C963, C986, C989, C992, and C996 each coordinate [4Fe-4S] cluster.

Belongs to the dihydropyrimidine dehydrogenase family. As to quaternary structure, homodimer. FAD serves as cofactor. FMN is required as a cofactor. Requires [4Fe-4S] cluster as cofactor.

The protein localises to the cytoplasm. The catalysed reaction is 5,6-dihydrouracil + NADP(+) = uracil + NADPH + H(+). It catalyses the reaction 5,6-dihydrothymine + NADP(+) = thymine + NADPH + H(+). It functions in the pathway amino-acid biosynthesis; beta-alanine biosynthesis. With respect to regulation, inactivated by 5-iodouracil. In terms of biological role, involved in pyrimidine base degradation. Catalyzes the reduction of uracil and thymine. The polypeptide is Dihydropyrimidine dehydrogenase [NADP(+)] (DPYD) (Sus scrofa (Pig)).